We begin with the raw amino-acid sequence, 62 residues long: uncharacterized protein (62 aa).

This is an uncharacterized protein from Methanocaldococcus jannaschii (strain ATCC 43067 / DSM 2661 / JAL-1 / JCM 10045 / NBRC 100440) (Methanococcus jannaschii).